We begin with the raw amino-acid sequence, 249 residues long: Sugar fermentation stimulation protein homolog (249 aa).

Belongs to the SfsA family.

The protein is Sugar fermentation stimulation protein homolog of Prochlorococcus marinus (strain MIT 9515).